The primary structure comprises 508 residues: Lysine--tRNA ligase (508 aa).

Glutamate 418 and glutamate 425 together coordinate Mg(2+).

The protein belongs to the class-II aminoacyl-tRNA synthetase family. As to quaternary structure, homodimer. Mg(2+) is required as a cofactor.

The protein resides in the cytoplasm. The catalysed reaction is tRNA(Lys) + L-lysine + ATP = L-lysyl-tRNA(Lys) + AMP + diphosphate. This is Lysine--tRNA ligase from Burkholderia ambifaria (strain MC40-6).